Reading from the N-terminus, the 424-residue chain is Endochitinase 1 (424 aa).

The N-terminal stretch at Met-1–Ala-22 is a signal peptide. In terms of domain architecture, GH18 spans Tyr-39–Pro-402. N-linked (GlcNAc...) asparagine glycosylation is found at Asn-74, Asn-78, and Asn-96. Residues Gly-103–Asn-104 and Gly-130–Thr-133 each bind chitin. The Proton donor role is filled by Glu-172. Chitin contacts are provided by residues Tyr-173 and Met-238 to Asp-241. N-linked (GlcNAc...) asparagine glycans are attached at residues Asn-248 and Asn-347. Trp-379 contacts chitin. The interval Arg-385–Pro-412 is disordered. Polar residues predominate over residues Ile-392–Leu-408.

This sequence belongs to the glycosyl hydrolase 18 family. Chitinase class V subfamily.

It is found in the secreted. It carries out the reaction Random endo-hydrolysis of N-acetyl-beta-D-glucosaminide (1-&gt;4)-beta-linkages in chitin and chitodextrins.. Secreted chitinase involved in the degradation of chitin, a component of the cell walls of fungi and exoskeletal elements of some animals (including worms and arthropods). Participates in the infection process and directly acts in the penetration process of the host cuticle. This Metarhizium robertsii (strain ARSEF 23 / ATCC MYA-3075) (Metarhizium anisopliae (strain ARSEF 23)) protein is Endochitinase 1 (chit1).